Here is a 194-residue protein sequence, read N- to C-terminus: Imidazoleglycerol-phosphate dehydratase (194 aa).

The protein belongs to the imidazoleglycerol-phosphate dehydratase family.

Its subcellular location is the cytoplasm. The enzyme catalyses D-erythro-1-(imidazol-4-yl)glycerol 3-phosphate = 3-(imidazol-4-yl)-2-oxopropyl phosphate + H2O. It functions in the pathway amino-acid biosynthesis; L-histidine biosynthesis; L-histidine from 5-phospho-alpha-D-ribose 1-diphosphate: step 6/9. This is Imidazoleglycerol-phosphate dehydratase from Lacticaseibacillus paracasei (strain ATCC 334 / BCRC 17002 / CCUG 31169 / CIP 107868 / KCTC 3260 / NRRL B-441) (Lactobacillus paracasei).